A 232-amino-acid polypeptide reads, in one-letter code: GFP-like non-fluorescent chromoprotein FP595 (232 aa).

The 2-iminomethyl-5-imidazolinone (Met-Gly) cross-link spans 63 to 65 (MYG). A (E)-2,3-didehydrotyrosine modification is found at tyrosine 64.

This sequence belongs to the GFP family. Contains a chromophore consisting of modified amino acid residues. The chromophore is formed by autocatalytic backbone condensation between Xaa-N and Gly-(N+2), oxidation of Tyr-(N+1) to didehydrotyrosine, and formation of a double bond to the alpha-amino nitrogen of residue Tyr-(N+1). Maturation of the chromophore requires nothing other than molecular oxygen. Tentacle tips.

In terms of biological role, pigment protein that is intensely purple in color. The polypeptide is GFP-like non-fluorescent chromoprotein FP595 (Anemonia sulcata (Mediterranean snakelocks sea anemone)).